A 488-amino-acid chain; its full sequence is Ribosomal RNA small subunit methyltransferase F (488 aa).

Residues 135–141 (ASAPGSK), Glu159, Asp186, and Asp204 contribute to the S-adenosyl-L-methionine site. Catalysis depends on Cys257, which acts as the Nucleophile.

It belongs to the class I-like SAM-binding methyltransferase superfamily. RsmB/NOP family.

Its subcellular location is the cytoplasm. It catalyses the reaction cytidine(1407) in 16S rRNA + S-adenosyl-L-methionine = 5-methylcytidine(1407) in 16S rRNA + S-adenosyl-L-homocysteine + H(+). Its function is as follows. Specifically methylates the cytosine at position 1407 (m5C1407) of 16S rRNA. The chain is Ribosomal RNA small subunit methyltransferase F from Shewanella pealeana (strain ATCC 700345 / ANG-SQ1).